Here is a 188-residue protein sequence, read N- to C-terminus: Mitochondrial import receptor subunit TOM20-1 (188 aa).

The Cytoplasmic portion of the chain corresponds to 1–164 (MDKLNFFEEI…VVKNKKSSDE (164 aa)). The chain crosses the membrane as a helical span at residues 165–182 (KYIVMGWVILAIGVVACI). At 183-188 (SFRKLR) the chain is on the mitochondrial intermembrane side.

Belongs to the Tom20 family. Forms part of the preprotein translocase complex of the outer mitochondrial membrane (TOM complex) which consists of at least 6 different proteins (TOM5, TOM6, TOM7, TOM20, TOM22/TOM9 and TOM40). Component of a mitochondrial large protein complex that contains, at least, MIC60, DGS1, TOM40, TOM20 proteins, and petC/RISP. As to expression, barely detected in roots.

It is found in the mitochondrion outer membrane. In terms of biological role, central component of the receptor complex responsible for the recognition and translocation of cytosolically synthesized mitochondrial preproteins. Together with TOM22 functions as the transit peptide receptor at the surface of the mitochondrion outer membrane and facilitates the movement of preproteins into the translocation pore. The sequence is that of Mitochondrial import receptor subunit TOM20-1 from Arabidopsis thaliana (Mouse-ear cress).